An 822-amino-acid polypeptide reads, in one-letter code: BDNF/NT-3 growth factors receptor (822 aa).

An N-terminal signal peptide occupies residues 1–31 (MSSWIRWHGPAMARLWGFCWLVVGFWRAAFA). Disulfide bonds link C32/C38 and C36/C45. In terms of domain architecture, LRRNT spans 32-61 (CPTSCKCSASRIWCSDPSPGIVAFPRLEPN). At 32–430 (CPTSCKCSAS…DVTDKTGREH (399 aa)) the chain is on the extracellular side. N-linked (GlcNAc...) asparagine glycosylation is found at N67, N95, and N121. 2 LRR repeats span residues 92 to 113 (GLRN…AFLK) and 116 to 137 (NLQH…HFRH). The region spanning 148 to 196 (NPFTCSCDIMWIKTLQEAKSSPDTQDLYCLNESSKNIPLANLQIPNCGL) is the LRRCT domain. 2 disulfide bridges follow: C152–C176 and C154–C194. Residues N178, N205, N241, N254, N280, N325, N338, and N412 are each glycosylated (N-linked (GlcNAc...) asparagine). Ig-like C2-type domains lie at 197 to 282 (PSAN…VNLT) and 295 to 365 (PTSD…IAKN). Cysteines 218 and 266 form a disulfide. A disulfide bridge links C302 with C345. The chain crosses the membrane as a helical span at residues 431 to 454 (LSVYAVVVIASVVGFCLLVMLFLL). The interaction with MAPK8IP3/JIP3 stretch occupies residues 455–466 (KLARHSKFGMKG). Topologically, residues 455–822 (KLARHSKFGM…ASPVYLDILG (368 aa)) are cytoplasmic. The tract at residues 475 to 498 (DDSASPLHHISNGSNTPSSSEGGP) is disordered. Over residues 485–495 (SNGSNTPSSSE) the composition is skewed to polar residues. Y516 is subject to Phosphotyrosine; by autocatalysis. The Protein kinase domain occupies 538–807 (IVLKRELGEG…KNIKGIHTLL (270 aa)). ATP-binding positions include 544–552 (LGEGAFGKV) and K572. The active-site Proton acceptor is D676. Residues Y702, Y706, Y707, and Y817 each carry the phosphotyrosine; by autocatalysis modification.

Belongs to the protein kinase superfamily. Tyr protein kinase family. Insulin receptor subfamily. In terms of assembly, exists in a dynamic equilibrium between monomeric (low affinity) and dimeric (high affinity) structures. Interacts (phosphorylated upon activation by BDNF) with SHC1; mediates SHC1 phosphorylation and activation. Interacts (phosphorylated upon activation by BDNF) with PLCG1 and/or PLCG2; mediates PLCG1 phosphorylation and activation. Interacts with SH2B1 and SH2B2. Interacts with NGFR; may regulate the ligand specificity of the receptor. Interacts with SORCS2; this interaction is important for normal targeting to post-synaptic densities in response to high-frequency stimulation. Interacts (phosphorylated upon ligand-binding) with SH2D1A; regulates NTRK2. Interacts with SQSTM1 and KIDINS220. Interacts (phosphorylated upon ligand-binding) with FRS2; activates the MAPK signaling pathway. Interacts with APPL1. Interacts with MAPK8IP3/JIP3 and KLC1; interaction with KLC1 is mediated by MAPK8IP3/JIP3. Interacts with SORL1; this interaction facilitates NTRK2 trafficking between synaptic plasma membranes, postsynaptic densities and cell soma, hence positively regulates BDNF signaling. Interacts with SLITRK2. Post-translationally, phosphorylated. Undergoes ligand-mediated autophosphorylation that is required for interaction with SHC1 and PLCG1 and other downstream effectors. Isoform TrkB-T-Shc is not phosphorylated. Ubiquitinated. Undergoes polyubiquitination upon activation; regulated by NGFR. Ubiquitination regulates the internalization of the receptor. In terms of tissue distribution, isoform TrkB is expressed in the central and peripheral nervous system. In the central nervous system (CNS), expression is observed in the cerebral cortex, hippocampus, thalamus, choroid plexus, granular layer of the cerebellum, brain stem, and spinal cord. In the peripheral nervous system, it is expressed in many cranial ganglia, the ophthalmic nerve, the vestibular system, multiple facial structures, the submaxillary glands, and dorsal root ganglia. Isoform TrkB-T1 is mainly expressed in the brain but also detected in other tissues including pancreas, kidney and heart. Isoform TrkB-T-Shc is predominantly expressed in the brain.

It is found in the cell membrane. It localises to the endosome membrane. The protein localises to the early endosome membrane. Its subcellular location is the cell projection. The protein resides in the axon. It is found in the dendrite. It localises to the cytoplasm. The protein localises to the perinuclear region. Its subcellular location is the postsynaptic density. The catalysed reaction is L-tyrosyl-[protein] + ATP = O-phospho-L-tyrosyl-[protein] + ADP + H(+). Its activity is regulated as follows. The neuronal activity and the influx of calcium positively regulate the kinase activity and the internalization of the receptor which are both important for active signaling. Regulated by NGFR that may control the internalization of the receptor. NGFR may also stimulate the activation by BDNF compared to NTF3 and NTF4. SH2D1A inhibits the autophosphorylation of the receptor, and alters the recruitment and activation of downstream effectors and signaling cascades. The formation of active receptors dimers able to fully transduce the ligand-mediated signal, may be negatively regulated by the formation of inactive heterodimers with the non-catalytic isoforms. Functionally, receptor tyrosine kinase involved in the development and the maturation of the central and the peripheral nervous systems through regulation of neuron survival, proliferation, migration, differentiation, and synapse formation and plasticity. Receptor for BDNF/brain-derived neurotrophic factor and NTF4/neurotrophin-4. Alternatively can also bind NTF3/neurotrophin-3 which is less efficient in activating the receptor but regulates neuron survival through NTRK2. Upon ligand-binding, undergoes homodimerization, autophosphorylation and activation. Recruits, phosphorylates and/or activates several downstream effectors including SHC1, FRS2, SH2B1, SH2B2 and PLCG1 that regulate distinct overlapping signaling cascades. Through SHC1, FRS2, SH2B1, SH2B2 activates the GRB2-Ras-MAPK cascade that regulates for instance neuronal differentiation including neurite outgrowth. Through the same effectors controls the Ras-PI3 kinase-AKT1 signaling cascade that mainly regulates growth and survival. Through PLCG1 and the downstream protein kinase C-regulated pathways controls synaptic plasticity. Thereby, plays a role in learning and memory by regulating both short term synaptic function and long-term potentiation. PLCG1 also leads to NF-Kappa-B activation and the transcription of genes involved in cell survival. Hence, it is able to suppress anoikis, the apoptosis resulting from loss of cell-matrix interactions. May also play a role in neutrophin-dependent calcium signaling in glial cells and mediate communication between neurons and glia. This Homo sapiens (Human) protein is BDNF/NT-3 growth factors receptor (NTRK2).